The following is a 459-amino-acid chain: Exodeoxyribonuclease 7 large subunit (459 aa).

It belongs to the XseA family. Heterooligomer composed of large and small subunits.

It localises to the cytoplasm. It catalyses the reaction Exonucleolytic cleavage in either 5'- to 3'- or 3'- to 5'-direction to yield nucleoside 5'-phosphates.. In terms of biological role, bidirectionally degrades single-stranded DNA into large acid-insoluble oligonucleotides, which are then degraded further into small acid-soluble oligonucleotides. The sequence is that of Exodeoxyribonuclease 7 large subunit from Pseudomonas putida (strain ATCC 47054 / DSM 6125 / CFBP 8728 / NCIMB 11950 / KT2440).